Reading from the N-terminus, the 132-residue chain is Matrix protein (132 aa).

The protein resides in the virion membrane. Functionally, envelope protein that may play a role in host-cell attachment and viral genome entry. The polypeptide is Matrix protein (Halorubrum pleomorphic virus 1 (HRPV-1)).